The chain runs to 132 residues: uncharacterized protein (132 aa).

Residues 1–25 (MRFTKVVGFLSVLGLAAVFPLTAQA) form the signal peptide.

This is an uncharacterized protein from Bacillus subtilis (strain 168).